The following is a 130-amino-acid chain: MKKQGILHRDLAALIASLGHGDLVVVADSGLPVPPGVPCIDLAVTKGVPSFLPVLEAILSEMVVENATVAEELKPNEQIIEALAGRLKPVQLHFINHESLKTCCRQARAVIRTGEWTPYANILLYAGVAF.

The active-site Proton donor is His-20. Substrate contacts are provided by residues Asp-28, His-97, and Tyr-119–Asn-121.

It belongs to the RbsD / FucU family. RbsD subfamily. As to quaternary structure, homodecamer.

Its subcellular location is the cytoplasm. The catalysed reaction is beta-D-ribopyranose = beta-D-ribofuranose. The protein operates within carbohydrate metabolism; D-ribose degradation; D-ribose 5-phosphate from beta-D-ribopyranose: step 1/2. Its function is as follows. Catalyzes the interconversion of beta-pyran and beta-furan forms of D-ribose. The sequence is that of D-ribose pyranase from Heliobacterium modesticaldum (strain ATCC 51547 / Ice1).